Consider the following 395-residue polypeptide: Putative ankyrin repeat protein RF_0950 (395 aa).

ANK repeat units follow at residues 3–32 (YQKE…NPNT), 36–65 (YGKL…DPNA), 69–98 (IKDP…NPNV), 101–130 (RHEN…DPNQ), 134–166 (NGNT…EKAL), 172–201 (NGET…TVNI), and 205–234 (AGNT…ELNE). Positions 272-395 (KTKLIYQGGD…YLKVPILKEK (124 aa)) constitute a Glutamine amidotransferase type-1 domain. The active-site Nucleophile is the C377.

The chain is Putative ankyrin repeat protein RF_0950 from Rickettsia felis (strain ATCC VR-1525 / URRWXCal2) (Rickettsia azadi).